The chain runs to 315 residues: Isoaspartyl peptidase/L-asparaginase 1 (315 aa).

Ser-169 carries the phosphoserine modification. Thr-183 serves as the catalytic Nucleophile. Substrate-binding positions include 211–214 (RIGD) and 233–236 (TGKG).

It belongs to the Ntn-hydrolase family. As to quaternary structure, heterotetramer of two alpha and two beta chains arranged as a dimer of alpha/beta heterodimers. Post-translationally, cleaved into an alpha and beta chain by autocatalysis; this activates the enzyme. The N-terminal residue of the beta subunit is responsible for the nucleophile hydrolase activity.

It catalyses the reaction Cleavage of a beta-linked Asp residue from the N-terminus of a polypeptide.. Its function is as follows. Acts in asparagine catabolism but also in the final steps of protein and degradation via hydrolysis of a range of isoaspartyl dipeptides. The affinity for Asn and at least 4 isoaspartyl dipeptides (L-beta-Asp-Ala, L-beta-Asp-Gly, L-beta-Asp-Leu, L-beta-Asp-Phe) is quite low, KM being greater than 4.0 mM. The enzyme is inactive on alpha-aspartyl dipeptides. This is Isoaspartyl peptidase/L-asparaginase 1 from Arabidopsis thaliana (Mouse-ear cress).